The primary structure comprises 489 residues: Kynureninase 2 (489 aa).

Over residues 1-12 the composition is skewed to polar residues; the sequence is MDASAAISQLRQ. The interval 1-25 is disordered; the sequence is MDASAAISQLRQGQKPEWPQNANTS. Pyridoxal 5'-phosphate contacts are provided by residues leucine 149, threonine 150, 177–180, aspartate 261, histidine 264, and tyrosine 286; that span reads FPSD. At lysine 287 the chain carries N6-(pyridoxal phosphate)lysine. Pyridoxal 5'-phosphate contacts are provided by tryptophan 317 and asparagine 345.

The protein belongs to the kynureninase family. In terms of assembly, homodimer. Pyridoxal 5'-phosphate is required as a cofactor.

It localises to the cytoplasm. It catalyses the reaction L-kynurenine + H2O = anthranilate + L-alanine + H(+). The catalysed reaction is 3-hydroxy-L-kynurenine + H2O = 3-hydroxyanthranilate + L-alanine + H(+). The protein operates within amino-acid degradation; L-kynurenine degradation; L-alanine and anthranilate from L-kynurenine: step 1/1. It functions in the pathway cofactor biosynthesis; NAD(+) biosynthesis; quinolinate from L-kynurenine: step 2/3. Its function is as follows. Catalyzes the cleavage of L-kynurenine (L-Kyn) and L-3-hydroxykynurenine (L-3OHKyn) into anthranilic acid (AA) and 3-hydroxyanthranilic acid (3-OHAA), respectively. This Phaeosphaeria nodorum (strain SN15 / ATCC MYA-4574 / FGSC 10173) (Glume blotch fungus) protein is Kynureninase 2.